A 329-amino-acid chain; its full sequence is Endochitinase A (329 aa).

Residues 1–23 (MRLCKFTALSSLLFSLLLLSASA) form the signal peptide. A Chitin-binding type-1 domain is found at 24–65 (EQCGSQAGGARCPSGLCCSKFGWCGNTNDYCGPGNCQSQCPG). Intrachain disulfides connect cysteine 26–cysteine 41, cysteine 35–cysteine 47, cysteine 40–cysteine 54, and cysteine 59–cysteine 63. At proline 67 the chain carries 4-hydroxyproline; partial. Residues proline 69, proline 71, proline 72, and proline 74 each carry the 4-hydroxyproline modification. A 4-hydroxyproline; partial modification is found at proline 75. 3 cysteine pairs are disulfide-bonded: cysteine 101–cysteine 163, cysteine 175–cysteine 183, and cysteine 282–cysteine 314. The Proton donor role is filled by glutamate 145. The propeptide at 323 to 329 (GLLVDTM) is removed in mature form.

It belongs to the glycosyl hydrolase 19 family. Chitinase class I subfamily. In terms of processing, the 4-hydroxyproline residues are not glycosylated in this plant vacuolar protein.

It is found in the vacuole. It carries out the reaction Random endo-hydrolysis of N-acetyl-beta-D-glucosaminide (1-&gt;4)-beta-linkages in chitin and chitodextrins.. Defense against chitin-containing fungal pathogens. The chain is Endochitinase A (CHN48) from Nicotiana tabacum (Common tobacco).